The primary structure comprises 96 residues: Nucleoid-associated protein TC_0612 (96 aa).

Belongs to the YbaB/EbfC family. Homodimer.

It is found in the cytoplasm. The protein localises to the nucleoid. Its function is as follows. Binds to DNA and alters its conformation. May be involved in regulation of gene expression, nucleoid organization and DNA protection. This is Nucleoid-associated protein TC_0612 from Chlamydia muridarum (strain MoPn / Nigg).